A 259-amino-acid chain; its full sequence is Undecaprenyl-diphosphatase 3 (259 aa).

A run of 8 helical transmembrane segments spans residues 1 to 21 (MNWL…FLPI), 39 to 59 (AGLF…FIYY), 71 to 91 (FSKL…IGLL), 99 to 119 (ISKT…FLYM), 133 to 153 (ITYK…FPAI), 174 to 194 (AYFS…LQFV), 208 to 228 (SLIV…SWMI), and 236 to 256 (LKVF…LQFT).

It belongs to the UppP family.

It is found in the cell membrane. The enzyme catalyses di-trans,octa-cis-undecaprenyl diphosphate + H2O = di-trans,octa-cis-undecaprenyl phosphate + phosphate + H(+). In terms of biological role, catalyzes the dephosphorylation of undecaprenyl diphosphate (UPP). Confers resistance to bacitracin. The sequence is that of Undecaprenyl-diphosphatase 3 from Bacillus cereus (strain ATCC 10987 / NRS 248).